The following is a 380-amino-acid chain: Probable tRNA-splicing endonuclease subunit sen2 (380 aa).

Catalysis depends on residues tyrosine 281, histidine 289, and lysine 325.

It belongs to the tRNA-intron endonuclease family. Heterotetramer composed of sen2, sen15, sen34 and sen54. Interacts directly with sen54.

The enzyme catalyses pretRNA = a 3'-half-tRNA molecule with a 5'-OH end + a 5'-half-tRNA molecule with a 2',3'-cyclic phosphate end + an intron with a 2',3'-cyclic phosphate and a 5'-hydroxyl terminus.. Functionally, constitutes one of the two catalytic subunit of the tRNA-splicing endonuclease complex, a complex responsible for identification and cleavage of the splice sites in pre-tRNA. It cleaves pre-tRNA at the 5'- and 3'-splice sites to release the intron. The products are an intron and two tRNA half-molecules bearing 2',3'-cyclic phosphate and 5'-OH termini. There are no conserved sequences at the splice sites, but the intron is invariably located at the same site in the gene, placing the splice sites an invariant distance from the constant structural features of the tRNA body. This subunit may anchor the endonuclease complex to the nuclear membrane. Probably carries the active site for 5'-splice site cleavage. This is Probable tRNA-splicing endonuclease subunit sen2 (sen2) from Schizosaccharomyces pombe (strain 972 / ATCC 24843) (Fission yeast).